Here is a 122-residue protein sequence, read N- to C-terminus: Serum amyloid A-1 protein (122 aa).

A signal peptide spans 1–18; that stretch reads MKPFVAIIFCFLILGVDS. The tract at residues 19–45 is important for amyloid formation; the sequence is QRWFQFMKEAGQGTRDMWRAYTDMREA. Positions 100–122 are disordered; the sequence is ANEWGRSGKDPNFFRPPGLPSKY.

Belongs to the SAA family. As to quaternary structure, homohexamer; dimer of trimers. Can form amyloid fibrils after partial proteolysis; the native, undenatured protein does not form amyloid fibrils (in vitro). Apolipoprotein of the HDL complex. Binds to heparin. Detected in liver, spleen and kidney.

The protein resides in the secreted. Its function is as follows. Major acute phase protein. This is Serum amyloid A-1 protein (SAA1) from Mesocricetus auratus (Golden hamster).